The chain runs to 176 residues: Probable inosine/xanthosine triphosphatase (176 aa).

Asp-36 provides a ligand contact to Mg(2+).

Belongs to the YjjX NTPase family. Homodimer. Requires Mg(2+) as cofactor. Mn(2+) serves as cofactor.

The catalysed reaction is XTP + H2O = XDP + phosphate + H(+). The enzyme catalyses ITP + H2O = IDP + phosphate + H(+). In terms of biological role, phosphatase that hydrolyzes non-canonical purine nucleotides such as XTP and ITP to their respective diphosphate derivatives. Probably excludes non-canonical purines from DNA/RNA precursor pool, thus preventing their incorporation into DNA/RNA and avoiding chromosomal lesions. This Saccharolobus islandicus (strain Y.G.57.14 / Yellowstone #1) (Sulfolobus islandicus) protein is Probable inosine/xanthosine triphosphatase.